Consider the following 221-residue polypeptide: Guanylate kinase (221 aa).

In terms of domain architecture, Guanylate kinase-like spans 20 to 199; it reads GLMFILSSPS…CFGKVREILA (180 aa). ATP is bound at residue 27 to 34; that stretch reads SPSGAGKT.

It belongs to the guanylate kinase family.

It localises to the cytoplasm. The catalysed reaction is GMP + ATP = GDP + ADP. In terms of biological role, essential for recycling GMP and indirectly, cGMP. The polypeptide is Guanylate kinase (Novosphingobium aromaticivorans (strain ATCC 700278 / DSM 12444 / CCUG 56034 / CIP 105152 / NBRC 16084 / F199)).